Reading from the N-terminus, the 477-residue chain is Acetolactate synthase small subunit 2, chloroplastic (477 aa).

The transit peptide at 1–53 (MAATTTATSLFSSRLHFQNQNQGYGFPAKTPNSLQVNQIIDGRKMRNATVLSA) directs the protein to the chloroplast. ACT domains are found at residues 78–150 (TISV…DLSK) and 309–383 (TLSL…NITH). L-valine contacts are provided by Asp85, Ile89, Ile90, Asn103, Ile104, Asn316, Val320, Leu321, Asn334, and Ile335.

The protein belongs to the acetolactate synthase small subunit family. As to quaternary structure, the acetolactate synthase complex contains 4 homodimers of the large catalytic subunits, and 1 homotetramer of the small regulatory subunits. In terms of tissue distribution, expressed in roots in the vascular tissuem in cells around the quiescent center, in floral organs at the tips of young siliques and in the joint region between the silique and the pedicel. Barely detectable in mature leaves or siliques.

It localises to the plastid. It is found in the chloroplast. Its subcellular location is the peroxisome. Its pathway is amino-acid biosynthesis; L-isoleucine biosynthesis; L-isoleucine from 2-oxobutanoate: step 1/4. It functions in the pathway amino-acid biosynthesis; L-valine biosynthesis; L-valine from pyruvate: step 1/4. Its function is as follows. Regulatory subunit of acetohydroxy-acid synthase. Involved in the feed-back inhibition by branched-chain amino acids but not in herbicide tolerance. May play a role in valine and isoleucine-mediated feedback inhibition in roots. In vitro, inhibited by valine, but not leucine or isoleucine. Required for reproductive development and sodium homeostasis. The sequence is that of Acetolactate synthase small subunit 2, chloroplastic from Arabidopsis thaliana (Mouse-ear cress).